A 379-amino-acid chain; its full sequence is Homoserine O-acetyltransferase (379 aa).

Positions methionine 1–arginine 24 are disordered. The AB hydrolase-1 domain occupies asparagine 60 to glutamate 365. Serine 165 (nucleophile) is an active-site residue. Residue arginine 236 coordinates substrate. Active-site residues include aspartate 329 and histidine 359. A substrate-binding site is contributed by aspartate 360.

Belongs to the AB hydrolase superfamily. MetX family. As to quaternary structure, homodimer.

The protein resides in the cytoplasm. It catalyses the reaction L-homoserine + acetyl-CoA = O-acetyl-L-homoserine + CoA. Its pathway is amino-acid biosynthesis; L-methionine biosynthesis via de novo pathway; O-acetyl-L-homoserine from L-homoserine: step 1/1. Its function is as follows. Transfers an acetyl group from acetyl-CoA to L-homoserine, forming acetyl-L-homoserine. The chain is Homoserine O-acetyltransferase from Thermobifida fusca (strain YX).